The sequence spans 130 residues: Small ribosomal subunit protein uS9 (130 aa).

This sequence belongs to the universal ribosomal protein uS9 family.

This is Small ribosomal subunit protein uS9 from Cupriavidus pinatubonensis (strain JMP 134 / LMG 1197) (Cupriavidus necator (strain JMP 134)).